A 489-amino-acid polypeptide reads, in one-letter code: Cytochrome P450 monooxygenase ataF (489 aa).

A helical membrane pass occupies residues 12–32; it reads WLEHSAVIATLFAFGTALFLV. Residue asparagine 289 is glycosylated (N-linked (GlcNAc...) asparagine). Heme is bound at residue cysteine 434.

It belongs to the cytochrome P450 family. The cofactor is heme.

Its subcellular location is the membrane. Its pathway is mycotoxin biosynthesis. Functionally, cytochrome P450 monooxygenase; part of the gene cluster that mediates the biosynthesis of acetylaranotin, a member of the epipolythiodioxopiperazine (ETP) class of toxins characterized by a disulfide-bridged cyclic dipeptide. The first step of acetylaranotin biosynthesis is performed by the NRPS ataP which produces diketopiperazine cyclo-L-Phe-L-Phe via the condensation of 2 phenylalanines (L-Phe). The ataC domain of ataTC then catalyzes the formation of bishydroxylation of cyclo-L-Phe-L-Phe. The glutathione S-transferase domain ataG in ataIMG further catalyzes the conjugation of two glutathiones to the bishydroxylated intermediate. Next, the dipeptidase ataJ removes the Glu residues. The following step is performed by the carbon sulfur lyase domain ataI of ataIMG which may convert the bis-cysteinyl adduct to yield an epidithiol intermediate. The ataT domain from ataTC then catalyzes the oxidation of the free dithiols, followed by a cyclization step catalyzed by the cytochrome P450 ataF. AtaF probably acts as an epoxidase to promote a dual epoxidation formation at C8 and C9 along with C8' and C9', followed by the spontaneous nucleophilic attack of the amide nitrogens N10 and N10' to yield an intermediate with the pyrrolidine partial structure. The final steps of acetylaranotin biosynthesis involve the acetylation and ring rearrangement of an epitetrathiodiketopiperazine intermediate to produce acetylaranotin. AtaH probably catalyzes the acetylation of epitetrathiodiketopiperazine to produce a diacetate and ataY is responsible for the formation of the dihydrooxepin moiety that converts the diacetate intermediate to acetylaranotin via acetylapoaranotin. Both enzymes could function independently in the absence of the other. The acetylaranotin bis-thiomethyltransferase ataS located outside of acetylaranotin gene cluster is the main thiomethyltransferase responsible for converting acetylaranotin and its related intermediates to their methylated forms. The protein is Cytochrome P450 monooxygenase ataF of Aspergillus terreus (strain NIH 2624 / FGSC A1156).